Reading from the N-terminus, the 99-residue chain is RNA-binding protein HI_1333 (99 aa).

The region spanning 2–98 (TTLSTKQKQF…SEEAKIQLPR (97 aa)) is the CRM domain.

In Haemophilus influenzae (strain ATCC 51907 / DSM 11121 / KW20 / Rd), this protein is RNA-binding protein HI_1333.